We begin with the raw amino-acid sequence, 284 residues long: Tropomyosin beta chain (284 aa).

Met1 is modified (N-acetylmethionine). The disordered stretch occupies residues Met1–Ala78. Residues Met1–Leu284 adopt a coiled-coil conformation. Composition is skewed to basic and acidic residues over residues Lys12–Glu40 and Lys51–Ala78. Position 53 is a phosphothreonine (Thr53). Residue Ser61 is modified to Phosphoserine; by PIK3CG. Thr79 bears the Phosphothreonine mark. A Phosphoserine modification is found at Ser87. Thr108 is subject to Phosphothreonine. Positions Glu117–Lys136 are disordered. Residues Ser158, Ser206, and Ser215 each carry the phosphoserine modification. Thr252 carries the post-translational modification Phosphothreonine. Position 261 is a phosphotyrosine (Tyr261). Phosphoserine is present on Ser271. The residue at position 282 (Thr282) is a Phosphothreonine. Position 283 is a phosphoserine (Ser283).

The protein belongs to the tropomyosin family. In terms of assembly, homodimer. Heterodimer of an alpha (TPM1, TPM3 or TPM4) and a beta (TPM2) chain. Post-translationally, phosphorylated on Ser-61 by PIK3CG. Phosphorylation on Ser-61 is required for ADRB2 internalization.

The protein resides in the cytoplasm. It is found in the cytoskeleton. Its function is as follows. Binds to actin filaments in muscle and non-muscle cells. Plays a central role, in association with the troponin complex, in the calcium dependent regulation of vertebrate striated muscle contraction. Smooth muscle contraction is regulated by interaction with caldesmon. In non-muscle cells is implicated in stabilizing cytoskeleton actin filaments. The non-muscle isoform may have a role in agonist-mediated receptor internalization. The polypeptide is Tropomyosin beta chain (Tpm2) (Mus musculus (Mouse)).